Reading from the N-terminus, the 262-residue chain is Indole-3-glycerol phosphate synthase (262 aa).

The protein belongs to the TrpC family.

It catalyses the reaction 1-(2-carboxyphenylamino)-1-deoxy-D-ribulose 5-phosphate + H(+) = (1S,2R)-1-C-(indol-3-yl)glycerol 3-phosphate + CO2 + H2O. It participates in amino-acid biosynthesis; L-tryptophan biosynthesis; L-tryptophan from chorismate: step 4/5. The sequence is that of Indole-3-glycerol phosphate synthase from Bordetella bronchiseptica (strain ATCC BAA-588 / NCTC 13252 / RB50) (Alcaligenes bronchisepticus).